Reading from the N-terminus, the 485-residue chain is DNA polymerase subunit gamma-2 (485 aa).

The disordered stretch occupies residues 28-65 (GQPELLTERSSPKGGHVKSHAELEGNGEHPEAPGSGEG). S38 bears the Phosphoserine mark. The segment covering 46 to 58 (SHAELEGNGEHPE) has biased composition (basic and acidic residues).

As to quaternary structure, heterotrimer composed of a catalytic subunit and a homodimer of accessory subunits (POLG:POLG2).

It localises to the mitochondrion. It is found in the mitochondrion matrix. The protein localises to the mitochondrion nucleoid. Its function is as follows. Accessory subunit of DNA polymerase gamma solely responsible for replication of mitochondrial DNA (mtDNA). Acts as an allosteric regulator of the holoenzyme activities. Enhances the polymerase activity and the processivity of POLG by increasing its interactions with the DNA template. Suppresses POLG exonucleolytic proofreading especially toward homopolymeric templates bearing mismatched termini. Binds to single-stranded DNA. This is DNA polymerase subunit gamma-2 from Homo sapiens (Human).